Reading from the N-terminus, the 227-residue chain is Ribose-5-phosphate isomerase A (227 aa).

Residues 30-33 (TGST), 86-89 (DGAD), and 99-102 (KGMG) each bind substrate. Catalysis depends on Glu-108, which acts as the Proton acceptor. Position 126 (Lys-126) interacts with substrate.

The protein belongs to the ribose 5-phosphate isomerase family. In terms of assembly, homodimer.

The catalysed reaction is aldehydo-D-ribose 5-phosphate = D-ribulose 5-phosphate. The protein operates within carbohydrate degradation; pentose phosphate pathway; D-ribose 5-phosphate from D-ribulose 5-phosphate (non-oxidative stage): step 1/1. Its function is as follows. Catalyzes the reversible conversion of ribose-5-phosphate to ribulose 5-phosphate. The sequence is that of Ribose-5-phosphate isomerase A from Thermus thermophilus (strain ATCC 27634 / DSM 579 / HB8).